The primary structure comprises 218 residues: Ornithine decarboxylase antizyme 2 (218 aa).

The protein belongs to the ODC antizyme family. As to quaternary structure, interacts with ODC1 and thereby sterically blocks ODC homodimerization. Expressed ubiquitously in 24 hours embryos, with highest levels in telencephalon, lens, retina, cerebellum and hindbrain primordia.

Functionally, ornithine decarboxylase (ODC) antizyme protein that negatively regulates ODC activity and intracellular polyamine biosynthesis and uptake in response to increased intracellular polyamine levels. Binds to ODC monomers, inhibiting the assembly of the functional ODC homodimers. Does not target the ODC monomers for degradation, which allows a protein synthesis-independent restoration of ODC activity. In Danio rerio (Zebrafish), this protein is Ornithine decarboxylase antizyme 2 (oaz1b).